The following is a 103-amino-acid chain: Co-chaperonin GroES (103 aa).

It belongs to the GroES chaperonin family. In terms of assembly, heptamer of 7 subunits arranged in a ring. Interacts with the chaperonin GroEL.

The protein resides in the cytoplasm. Functionally, together with the chaperonin GroEL, plays an essential role in assisting protein folding. The GroEL-GroES system forms a nano-cage that allows encapsulation of the non-native substrate proteins and provides a physical environment optimized to promote and accelerate protein folding. GroES binds to the apical surface of the GroEL ring, thereby capping the opening of the GroEL channel. The protein is Co-chaperonin GroES of Prochlorococcus marinus (strain MIT 9211).